The primary structure comprises 114 residues: Large ribosomal subunit protein uL22 (114 aa).

It belongs to the universal ribosomal protein uL22 family. Part of the 50S ribosomal subunit.

Functionally, this protein binds specifically to 23S rRNA; its binding is stimulated by other ribosomal proteins, e.g. L4, L17, and L20. It is important during the early stages of 50S assembly. It makes multiple contacts with different domains of the 23S rRNA in the assembled 50S subunit and ribosome. The globular domain of the protein is located near the polypeptide exit tunnel on the outside of the subunit, while an extended beta-hairpin is found that lines the wall of the exit tunnel in the center of the 70S ribosome. The chain is Large ribosomal subunit protein uL22 from Streptococcus sanguinis (strain SK36).